Reading from the N-terminus, the 580-residue chain is Cyclin-K (580 aa).

The tract at residues 262–580 (KQQMPHHTPH…GGLGRAAWMR (319 aa)) is disordered. Low complexity-rich tracts occupy residues 263 to 277 (QQMP…QQPP) and 285 to 321 (VPQV…QQPK). A phosphoserine mark is found at Ser-324, Ser-328, Ser-329, and Ser-340. Positions 377–386 (PLAAALGEAE) are enriched in low complexity. The span at 400 to 426 (QIPPPAHPAPVHQPPPLPHRPPPPPPS) shows a compositional bias: pro residues. Over residues 427-444 (SYMTGMSTTSSYMSGEGY) the composition is skewed to low complexity. Over residues 477-568 (VYPPNPPPPP…PPPIPPPGMP (92 aa)) the composition is skewed to pro residues.

The protein belongs to the cyclin family. Cyclin C subfamily. Regulatory subunit of cyclin-dependent kinases. Identified in a complex with a kinase and the RNA polymerase II holoenzyme. Interacts with POLR2A. Interacts with CDK12 and CDK13. Interacts with CDK9 according to PubMed:10574912; does not interact with CDK9 according to PubMed:22012619. In terms of assembly, (Microbial infection) Interacts with human herpes virus 1 (HHV-1) transcriptional regulator ICP22. As to expression, widely expressed. Highest levels in testis.

It localises to the nucleus. Its function is as follows. Regulatory subunit of cyclin-dependent kinases that mediates activation of target kinases. Plays a role in transcriptional regulation via its role in regulating the phosphorylation of the C-terminal domain (CTD) of the large subunit of RNA polymerase II (POLR2A). The sequence is that of Cyclin-K (CCNK) from Homo sapiens (Human).